We begin with the raw amino-acid sequence, 512 residues long: Cytochrome P450 1A2 (512 aa).

The O-linked (GlcNAc) serine glycan is linked to Ser65. Phe222 is a binding site for substrate. A heme-binding site is contributed by Cys454.

The protein belongs to the cytochrome P450 family. Interacts with PGRMC1; the interaction requires PGRMC1 homodimerization. The cofactor is heme. As to expression, constitutively expressed in liver.

The protein resides in the endoplasmic reticulum membrane. The protein localises to the microsome membrane. It catalyses the reaction an organic molecule + reduced [NADPH--hemoprotein reductase] + O2 = an alcohol + oxidized [NADPH--hemoprotein reductase] + H2O + H(+). The catalysed reaction is 17beta-estradiol + reduced [NADPH--hemoprotein reductase] + O2 = 2-hydroxy-17beta-estradiol + oxidized [NADPH--hemoprotein reductase] + H2O + H(+). It carries out the reaction 17beta-estradiol + reduced [NADPH--hemoprotein reductase] + O2 = 4-hydroxy-17beta-estradiol + oxidized [NADPH--hemoprotein reductase] + H2O + H(+). The enzyme catalyses estrone + reduced [NADPH--hemoprotein reductase] + O2 = 2-hydroxyestrone + oxidized [NADPH--hemoprotein reductase] + H2O + H(+). It catalyses the reaction estrone + reduced [NADPH--hemoprotein reductase] + O2 = 4-hydroxyestrone + oxidized [NADPH--hemoprotein reductase] + H2O + H(+). The catalysed reaction is cholesterol + reduced [NADPH--hemoprotein reductase] + O2 = 25-hydroxycholesterol + oxidized [NADPH--hemoprotein reductase] + H2O + H(+). It carries out the reaction all-trans-retinol + reduced [NADPH--hemoprotein reductase] + O2 = all-trans-retinal + oxidized [NADPH--hemoprotein reductase] + 2 H2O + H(+). The enzyme catalyses all-trans-retinal + reduced [NADPH--hemoprotein reductase] + O2 = all-trans-retinoate + oxidized [NADPH--hemoprotein reductase] + H2O + 2 H(+). It catalyses the reaction (5Z,8Z,11Z,14Z)-eicosatetraenoate + reduced [NADPH--hemoprotein reductase] + O2 = (14R,15S)-epoxy-(5Z,8Z,11Z)-eicosatrienoate + oxidized [NADPH--hemoprotein reductase] + H2O + H(+). The catalysed reaction is (5Z,8Z,11Z,14Z)-eicosatetraenoate + reduced [NADPH--hemoprotein reductase] + O2 = (14S,15R)-epoxy-(5Z,8Z,11Z)-eicosatrienoate + oxidized [NADPH--hemoprotein reductase] + H2O + H(+). It carries out the reaction (5Z,8Z,11Z,14Z,17Z)-eicosapentaenoate + reduced [NADPH--hemoprotein reductase] + O2 = (17R,18S)-epoxy-(5Z,8Z,11Z,14Z)-eicosatetraenoate + oxidized [NADPH--hemoprotein reductase] + H2O + H(+). The enzyme catalyses (4Z,7Z,10Z,13Z,16Z,19Z)-docosahexaenoate + reduced [NADPH--hemoprotein reductase] + O2 = (19R,20S)-epoxy-(4Z,7Z,10Z,13Z,16Z)-docosapentaenoate + oxidized [NADPH--hemoprotein reductase] + H2O + H(+). It catalyses the reaction (5S)-hydroperoxy-(6E,8Z,11Z,14Z)-eicosatetraenoate = 5-oxo-(6E,8Z,11Z,14Z)-eicosatetraenoate + H2O. The catalysed reaction is (12S)-hydroperoxy-(5Z,8Z,10E,14Z)-eicosatetraenoate = 12-oxo-(5Z,8Z,10E,14Z)-eicosatetraenoate + H2O. It carries out the reaction (15S)-hydroperoxy-(5Z,8Z,11Z,13E)-eicosatetraenoate = 15-oxo-(5Z,8Z,11Z,13E)-eicosatetraenoate + H2O. The enzyme catalyses (13S)-hydroperoxy-(9Z,11E)-octadecadienoate = 13-oxo-(9Z,11E)-octadecadienoate + H2O. It catalyses the reaction (5Z,8Z,11Z,14Z)-eicosatetraenoate + reduced [NADPH--hemoprotein reductase] + O2 = 13-hydroxy-(5Z,8Z,11Z,14Z)-eicosatetraenoate + oxidized [NADPH--hemoprotein reductase] + H2O + H(+). The catalysed reaction is (5Z,8Z,11Z,14Z)-eicosatetraenoate + reduced [NADPH--hemoprotein reductase] + O2 = 19-hydroxy-(5Z,8Z,11Z,14Z)-eicosatetraenoate + oxidized [NADPH--hemoprotein reductase] + H2O + H(+). It carries out the reaction (9Z,12Z)-octadecadienoate + reduced [NADPH--hemoprotein reductase] + O2 = 11-hydroxy-(9Z,12Z)-octadecadienoate + oxidized [NADPH--hemoprotein reductase] + H2O + H(+). It functions in the pathway cofactor metabolism; retinol metabolism. The protein operates within steroid metabolism; cholesterol metabolism. Its pathway is lipid metabolism; arachidonate metabolism. Functionally, a cytochrome P450 monooxygenase involved in the metabolism of various endogenous substrates, including fatty acids, steroid hormones and vitamins. Mechanistically, uses molecular oxygen inserting one oxygen atom into a substrate, and reducing the second into a water molecule, with two electrons provided by NADPH via cytochrome P450 reductase (NADPH--hemoprotein reductase). Catalyzes the hydroxylation of carbon-hydrogen bonds. Exhibits high catalytic activity for the formation of hydroxyestrogens from estrone (E1) and 17beta-estradiol (E2), namely 2-hydroxy E1 and E2. Metabolizes cholesterol toward 25-hydroxycholesterol, a physiological regulator of cellular cholesterol homeostasis. May act as a major enzyme for all-trans retinoic acid biosynthesis in the liver. Catalyzes two successive oxidative transformation of all-trans retinol to all-trans retinal and then to the active form all-trans retinoic acid. Primarily catalyzes stereoselective epoxidation of the last double bond of polyunsaturated fatty acids (PUFA), displaying a strong preference for the (R,S) stereoisomer. Catalyzes bisallylic hydroxylation and omega-1 hydroxylation of PUFA. May also participate in eicosanoids metabolism by converting hydroperoxide species into oxo metabolites (lipoxygenase-like reaction, NADPH-independent). Plays a role in the oxidative metabolism of xenobiotics. Catalyzes the N-hydroxylation of heterocyclic amines and the O-deethylation of phenacetin. Metabolizes caffeine via N3-demethylation. In Canis lupus familiaris (Dog), this protein is Cytochrome P450 1A2 (CYP1A2).